Consider the following 157-residue polypeptide: Endoribonuclease YbeY (157 aa).

Positions 114, 118, and 124 each coordinate Zn(2+).

The protein belongs to the endoribonuclease YbeY family. The cofactor is Zn(2+).

The protein resides in the cytoplasm. Its function is as follows. Single strand-specific metallo-endoribonuclease involved in late-stage 70S ribosome quality control and in maturation of the 3' terminus of the 16S rRNA. The polypeptide is Endoribonuclease YbeY (Klebsiella pneumoniae (strain 342)).